Reading from the N-terminus, the 244-residue chain is DNA polymerase sliding clamp (244 aa).

This sequence belongs to the PCNA family. In terms of assembly, homotrimer. The subunits circularize to form a toroid; DNA passes through its center. Replication factor C (RFC) is required to load the toroid on the DNA.

Its function is as follows. Sliding clamp subunit that acts as a moving platform for DNA processing. Responsible for tethering the catalytic subunit of DNA polymerase to DNA during high-speed replication. In conjunction with replication factor C (RFC) stimulates DNA synthesis by PolB, relieving inhibition by replication protein A (RPA). The polypeptide is DNA polymerase sliding clamp (Methanothermobacter thermautotrophicus (strain ATCC 29096 / DSM 1053 / JCM 10044 / NBRC 100330 / Delta H) (Methanobacterium thermoautotrophicum)).